The sequence spans 494 residues: Argininosuccinate synthase, chloroplastic (494 aa).

A chloroplast-targeting transit peptide spans 1-73 (MAEISATSFP…SRSCKNQAIR (73 aa)). Ala-74 is subject to N-acetylalanine. Residues 102–110 (AYSGGLDTS) and Ala-129 contribute to the ATP site. Residues Tyr-181 and Ser-186 each coordinate L-citrulline. An ATP-binding site is contributed by Gly-211. 3 residues coordinate L-aspartate: Thr-213, Asn-217, and Asp-218. Asn-217 provides a ligand contact to L-citrulline. Arg-221, Ser-270, Ser-279, Glu-355, and Tyr-367 together coordinate L-citrulline.

This sequence belongs to the argininosuccinate synthase family. Type 1 subfamily. Homotetramer.

The protein localises to the plastid. It localises to the chloroplast. The enzyme catalyses L-citrulline + L-aspartate + ATP = 2-(N(omega)-L-arginino)succinate + AMP + diphosphate + H(+). It functions in the pathway amino-acid biosynthesis; L-arginine biosynthesis; L-arginine from L-ornithine and carbamoyl phosphate: step 2/3. This chain is Argininosuccinate synthase, chloroplastic, found in Arabidopsis thaliana (Mouse-ear cress).